The primary structure comprises 310 residues: Alpha/beta hydrolase domain-containing protein 17A (310 aa).

Catalysis depends on charge relay system residues Ser-190, Asp-255, and His-284. A Phosphoserine modification is found at Ser-307.

The protein belongs to the AB hydrolase superfamily. ABHD17 family. In terms of processing, palmitoylated on cysteine residues located in a cysteine cluster at the N-terminus which promotes membrane localization. Palmitoylation is required for post-synaptic localization and for depalmitoylating activity towards DLG4/PSD95.

Its subcellular location is the cell membrane. It localises to the endosome membrane. It is found in the cell projection. The protein resides in the dendritic spine. The protein localises to the postsynaptic density membrane. It carries out the reaction S-hexadecanoyl-L-cysteinyl-[protein] + H2O = L-cysteinyl-[protein] + hexadecanoate + H(+). With respect to regulation, inhibited by palmostatin-B. Its function is as follows. Hydrolyzes fatty acids from S-acylated cysteine residues in proteins. Has depalmitoylating activity towards NRAS. Has depalmitoylating activity towards DLG4/PSD95. May have depalmitoylating activity towards MAP6. This is Alpha/beta hydrolase domain-containing protein 17A from Homo sapiens (Human).